The following is a 243-amino-acid chain: Protein VERNALIZATION 1 (243 aa).

An MADS-box domain is found at 1–61 (MGRGKVQLKR…GKLYEFATDS (61 aa)). The K-box domain occupies 88–178 (QGNWCHEYRK…QKELVEKQKA (91 aa)). Residues 122–178 (LKELQQLEQQLESSLKHIRSRKNQLMHESISELQRKERSLQEENKALQKELVEKQKA) are a coiled coil. The segment at 173–243 (VEKQKAHTQQ…PPWMVSHISG (71 aa)) is disordered. Residues 179–192 (HTQQAQWEQTHPQT) show a composition bias toward polar residues.

Its subcellular location is the nucleus. In terms of biological role, component of a grass-specific mechanism of vernalization, a process by which prolonged cold exposure provides competence to flower in daylengths longer than 12 hours. Involved in the exit of vernalization and confers flowering competency at the expense of freezing tolerance, probably by promoting the expression of VRN3; this process is essential in cv. Bd29-1 for flowering but seems do not occur in cv. Bd21. In Brachypodium distachyon (Purple false brome), this protein is Protein VERNALIZATION 1.